Here is a 349-residue protein sequence, read N- to C-terminus: Isopentenyl-diphosphate delta-isomerase (349 aa).

9–10 (RK) serves as a coordination point for substrate. FMN-binding positions include 65-67 (AMT), Ser-95, and Asn-124. Residue 95-97 (STH) coordinates substrate. Gln-154 provides a ligand contact to substrate. Glu-155 lines the Mg(2+) pocket. FMN contacts are provided by residues Lys-186, Ser-211, Thr-216, 262-264 (GLR), and 283-284 (SR).

The protein belongs to the IPP isomerase type 2 family. In terms of assembly, homooctamer. Dimer of tetramers. It depends on FMN as a cofactor. NADPH serves as cofactor. The cofactor is Mg(2+).

It localises to the cytoplasm. The enzyme catalyses isopentenyl diphosphate = dimethylallyl diphosphate. Involved in the biosynthesis of isoprenoids. Catalyzes the 1,3-allylic rearrangement of the homoallylic substrate isopentenyl (IPP) to its allylic isomer, dimethylallyl diphosphate (DMAPP). This chain is Isopentenyl-diphosphate delta-isomerase, found in Staphylococcus epidermidis (strain ATCC 35984 / DSM 28319 / BCRC 17069 / CCUG 31568 / BM 3577 / RP62A).